The primary structure comprises 543 residues: Chaperonin GroEL (543 aa).

ATP contacts are provided by residues 29–32, 86–90, G413, 476–478, and D492; these read TLGP, DGTTT, and NAA.

It belongs to the chaperonin (HSP60) family. Forms a cylinder of 14 subunits composed of two heptameric rings stacked back-to-back. Interacts with the co-chaperonin GroES.

The protein resides in the cytoplasm. It carries out the reaction ATP + H2O + a folded polypeptide = ADP + phosphate + an unfolded polypeptide.. In terms of biological role, together with its co-chaperonin GroES, plays an essential role in assisting protein folding. The GroEL-GroES system forms a nano-cage that allows encapsulation of the non-native substrate proteins and provides a physical environment optimized to promote and accelerate protein folding. The protein is Chaperonin GroEL of Brevibacillus choshinensis.